A 130-amino-acid polypeptide reads, in one-letter code: Large ribosomal subunit protein bL12 (130 aa).

It belongs to the bacterial ribosomal protein bL12 family. Homodimer. Part of the ribosomal stalk of the 50S ribosomal subunit. Forms a multimeric L10(L12)X complex, where L10 forms an elongated spine to which 2 to 4 L12 dimers bind in a sequential fashion. Binds GTP-bound translation factors.

In terms of biological role, forms part of the ribosomal stalk which helps the ribosome interact with GTP-bound translation factors. Is thus essential for accurate translation. The protein is Large ribosomal subunit protein bL12 of Parafrankia sp. (strain EAN1pec).